The primary structure comprises 84 residues: Large ribosomal subunit protein bL27 (84 aa).

The tract at residues 1–21 (MAHKKAGGSTRNGRDSESKRL) is disordered.

This sequence belongs to the bacterial ribosomal protein bL27 family.

The polypeptide is Large ribosomal subunit protein bL27 (Baumannia cicadellinicola subsp. Homalodisca coagulata).